Here is a 338-residue protein sequence, read N- to C-terminus: Uroporphyrinogen decarboxylase (338 aa).

Residues 27–31 (RQAGR), D77, Y151, S203, and H317 contribute to the substrate site.

The protein belongs to the uroporphyrinogen decarboxylase family. Homodimer.

The protein resides in the cytoplasm. It catalyses the reaction uroporphyrinogen III + 4 H(+) = coproporphyrinogen III + 4 CO2. Its pathway is porphyrin-containing compound metabolism; protoporphyrin-IX biosynthesis; coproporphyrinogen-III from 5-aminolevulinate: step 4/4. Functionally, catalyzes the decarboxylation of four acetate groups of uroporphyrinogen-III to yield coproporphyrinogen-III. The sequence is that of Uroporphyrinogen decarboxylase from Wolbachia sp. subsp. Drosophila simulans (strain wRi).